A 447-amino-acid chain; its full sequence is Asparagine--tRNA ligase (447 aa).

It belongs to the class-II aminoacyl-tRNA synthetase family. In terms of assembly, homodimer.

The protein localises to the cytoplasm. It catalyses the reaction tRNA(Asn) + L-asparagine + ATP = L-asparaginyl-tRNA(Asn) + AMP + diphosphate + H(+). The sequence is that of Asparagine--tRNA ligase from Lactococcus lactis subsp. cremoris (strain SK11).